The sequence spans 194 residues: Ribonuclease HII (194 aa).

Residues 3 to 193 (ILTAGVDEAG…VRNLLAQQTL (191 aa)) form the RNase H type-2 domain. Residues D9, E10, and D101 each contribute to the a divalent metal cation site.

It belongs to the RNase HII family. Mn(2+) serves as cofactor. Requires Mg(2+) as cofactor.

Its subcellular location is the cytoplasm. The enzyme catalyses Endonucleolytic cleavage to 5'-phosphomonoester.. Functionally, endonuclease that specifically degrades the RNA of RNA-DNA hybrids. This is Ribonuclease HII from Neisseria meningitidis serogroup C (strain 053442).